We begin with the raw amino-acid sequence, 296 residues long: Phosphatidylglycerol--prolipoprotein diacylglyceryl transferase (296 aa).

Helical transmembrane passes span 17-37 (LAVR…IVVG), 59-79 (MMFY…VLFY), and 97-117 (GGMS…LFAW). Residue R142 coordinates a 1,2-diacyl-sn-glycero-3-phospho-(1'-sn-glycerol). A run of 2 helical transmembrane segments spans residues 230-250 (MGAI…TVEF) and 265-285 (LSMG…MMIW).

This sequence belongs to the Lgt family.

It localises to the cell inner membrane. It carries out the reaction L-cysteinyl-[prolipoprotein] + a 1,2-diacyl-sn-glycero-3-phospho-(1'-sn-glycerol) = an S-1,2-diacyl-sn-glyceryl-L-cysteinyl-[prolipoprotein] + sn-glycerol 1-phosphate + H(+). It functions in the pathway protein modification; lipoprotein biosynthesis (diacylglyceryl transfer). In terms of biological role, catalyzes the transfer of the diacylglyceryl group from phosphatidylglycerol to the sulfhydryl group of the N-terminal cysteine of a prolipoprotein, the first step in the formation of mature lipoproteins. This is Phosphatidylglycerol--prolipoprotein diacylglyceryl transferase from Burkholderia mallei (strain NCTC 10247).